Consider the following 149-residue polypeptide: Transcriptional repressor NrdR (149 aa).

A zinc finger lies at Cys-3–Cys-34. Residues Pro-49–Gln-139 form the ATP-cone domain.

It belongs to the NrdR family. The cofactor is Zn(2+).

Negatively regulates transcription of bacterial ribonucleotide reductase nrd genes and operons by binding to NrdR-boxes. The sequence is that of Transcriptional repressor NrdR from Shewanella denitrificans (strain OS217 / ATCC BAA-1090 / DSM 15013).